We begin with the raw amino-acid sequence, 395 residues long: Flap endonuclease 1 (395 aa).

Positions 1-104 (MGIKHLYQLI…GELAKRFQRK (104 aa)) are N-domain. Asp34 contributes to the Mg(2+) binding site. The DNA site is built by Arg47 and Arg70. Asp86, Glu158, Glu160, Asp179, and Asp181 together coordinate Mg(2+). Positions 122-253 (DVEKFSRRTV…STALKLIREH (132 aa)) are I-domain. Residue Glu158 coordinates DNA. Positions 231 and 233 each coordinate DNA. Asp233 contacts Mg(2+). Residues 341–349 (QQSRLEGFF) form an interaction with PCNA region. The segment at 359-395 (KATLKRKADEKLEEKKKKQKVDAKAKKQAKAKPRTAG) is disordered. Over residues 364 to 383 (RKADEKLEEKKKKQKVDAKA) the composition is skewed to basic and acidic residues. Residues 384 to 395 (KKQAKAKPRTAG) show a composition bias toward basic residues.

It belongs to the XPG/RAD2 endonuclease family. FEN1 subfamily. As to quaternary structure, interacts with PCNA. Three molecules of fen1 bind to one PCNA trimer with each molecule binding to one PCNA monomer. PCNA stimulates the nuclease activity without altering cleavage specificity. It depends on Mg(2+) as a cofactor. Post-translationally, phosphorylated. Phosphorylation upon DNA damage induces relocalization to the nuclear plasma.

The protein resides in the nucleus. The protein localises to the nucleolus. It is found in the nucleoplasm. It localises to the mitochondrion. Structure-specific nuclease with 5'-flap endonuclease and 5'-3' exonuclease activities involved in DNA replication and repair. During DNA replication, cleaves the 5'-overhanging flap structure that is generated by displacement synthesis when DNA polymerase encounters the 5'-end of a downstream Okazaki fragment. It enters the flap from the 5'-end and then tracks to cleave the flap base, leaving a nick for ligation. Also involved in the long patch base excision repair (LP-BER) pathway, by cleaving within the apurinic/apyrimidinic (AP) site-terminated flap. Acts as a genome stabilization factor that prevents flaps from equilibrating into structures that lead to duplications and deletions. Also possesses 5'-3' exonuclease activity on nicked or gapped double-stranded DNA, and exhibits RNase H activity. Also involved in replication and repair of rDNA and in repairing mitochondrial DNA. This chain is Flap endonuclease 1 (fen1), found in Pyrenophora tritici-repentis (strain Pt-1C-BFP) (Wheat tan spot fungus).